We begin with the raw amino-acid sequence, 553 residues long: Expansin-like protein 7 (553 aa).

The N-terminal stretch at 1–19 (MRLLGSLILTLSLIASAFS) is a signal peptide. A glycan (N-linked (GlcNAc...) asparagine) is linked at Asn39. Residues 41 to 139 (SGSCEYGAYN…RKVSCDASGP (99 aa)) enclose the Expansin-like EG45 domain. 2 disulfide bridges follow: Cys44/Cys73 and Cys76/Cys134. Residues Asn276, Asn325, and Asn406 are each glycosylated (N-linked (GlcNAc...) asparagine). Disordered stretches follow at residues 421–447 (GGSG…SSTA) and 460–531 (SSSA…DEHH). Low complexity-rich tracts occupy residues 460–476 (SSSA…AGGK) and 484–493 (ISTSGITGSG). Over residues 497–516 (AASTSKTTSNPTGKTTGMTG) the composition is skewed to polar residues. Positions 520 to 531 (DHSESHSSDEHH) are enriched in basic and acidic residues.

Belongs to the expansin family. Expansin A subfamily.

It localises to the secreted. May serve to lubricate the movement of the cellulose microfibrils during cell growth and wall extension and/or may serve to maintain the fluid state of the slug cell wall. Overexpression shows aberrant stalk formation. This Dictyostelium discoideum (Social amoeba) protein is Expansin-like protein 7 (expl7).